A 1218-amino-acid chain; its full sequence is Probable RNA-dependent RNA polymerase SHL2 (1218 aa).

This sequence belongs to the RdRP family.

The catalysed reaction is RNA(n) + a ribonucleoside 5'-triphosphate = RNA(n+1) + diphosphate. In terms of biological role, involved in the RNA silencing pathway. Probably required for the generation of small interfering RNAs (siRNAs). Regulates shoot apical meristem (SAM) initiation and maintenance and leaf polarization through the trans-acting siRNAS (ta-siRNAs) pathway which probably modulates the expression of the ARF2, ARF3, ARF4, ARF14 and ARF15 genes. The polypeptide is Probable RNA-dependent RNA polymerase SHL2 (SHL2) (Oryza sativa subsp. japonica (Rice)).